A 400-amino-acid chain; its full sequence is WW domain-containing transcription regulator protein 1 (400 aa).

Residue Lys46 forms a Glycyl lysine isopeptide (Lys-Gly) (interchain with G-Cter in ubiquitin) linkage. Residues 52-117 (FFKEPDSGSH…QQHAHLRQQS (66 aa)) are disordered. Positions 61–70 (HSRQSSTDSS) are enriched in polar residues. Residues Ser62 and Ser89 each carry the phosphoserine modification. A compositionally biased stretch (low complexity) spans 91-110 (PASLQLGPGAGAAGSPAQQH). Positions 124 to 157 (LPLPPGWEMTFTATGQRYFLNHIEKITTWQDPRK) constitute a WW domain. Polar residues predominate over residues 192-211 (NHQHQQQMAPTNLSQQNHPT). Residues 192-216 (NHQHQQQMAPTNLSQQNHPTQNPPA) are disordered. The tract at residues 222 to 400 (PNALTTQQQQ…NKSEPFLTWL (179 aa)) is required for interaction with PALS1. Residues Ser295 and Ser311 each carry the phosphoserine modification. Residues 394 to 400 (EPFLTWL) carry the PDZ-binding motif.

Binds to SLC9A3R2 via the PDZ motif at the plasma membrane. Binds to YWHAZ in vivo and in vitro through the phosphoserine-binding motif RSHSSP. Interacts (via coiled-coil domain) with SMAD2 (via MH1 domain), SMAD3 and SMAD4. Interacts with MED15. Interacts with PAX8 and NKX2-1. Interacts with TEAD1, TEAD2, TEAD3 and TEAD4. Interacts (via WW domain) with PALS1. Interacts with LATS1. Interacts with YAP1 (when phosphorylated at 'Ser-112'). Interacts (via WW domain) with PRRG4 (via cytoplasmic domain). Interacts (via WW domain) with AMOTL2 (via PPXY motif); the interaction promotes WWTR1/TAZ localization to the cytoplasm and tight junctions, thereby inhibiting its transcriptional coactivator properties. Interacts (via WW domain) with AMOT; the interaction facilitates translocation of WWTR1/TAZ to the cytoplasm. Phosphorylated by LATS2 and STK3/MST2. Phosphorylation by LATS2 results in creation of 14-3-3 binding sites, retention in the cytoplasm, and functional inactivation. Phosphorylation results in the inhibition of transcriptional coactivation through YWHAZ-mediated nuclear export. Post-translationally, ubiquitinated at Lys-46; leading to proteasomal degradation. Deubiquitinated and stabilized by UCHL1 at Lys-46; leading to inhibition of osteoclastogenesis.

The protein localises to the cytoplasm. The protein resides in the nucleus. It localises to the cell membrane. Its subcellular location is the cell junction. It is found in the tight junction. Functionally, transcriptional coactivator which acts as a downstream regulatory target in the Hippo signaling pathway that plays a pivotal role in organ size control and tumor suppression by restricting proliferation and promoting apoptosis. The core of this pathway is composed of a kinase cascade wherein STK3/MST2 and STK4/MST1, in complex with its regulatory protein SAV1, phosphorylates and activates LATS1/2 in complex with its regulatory protein MOB1, which in turn phosphorylates and inactivates YAP1 oncoprotein and WWTR1/TAZ. WWTR1 enhances PAX8 and NKX2-1/TTF1-dependent gene activation. In conjunction with YAP1, involved in the regulation of TGFB1-dependent SMAD2 and SMAD3 nuclear accumulation. Plays a key role in coupling SMADs to the transcriptional machinery such as the mediator complex. Regulates embryonic stem-cell self-renewal, promotes cell proliferation and epithelial-mesenchymal transition. The chain is WW domain-containing transcription regulator protein 1 from Canis lupus familiaris (Dog).